Reading from the N-terminus, the 359-residue chain is MDPAERAQAARARVPRIDPYGFERPEDFDYAAYEEFFSTYLVILTKRAIKWSKLLKGNGGVRKSVTVKRYVRKGIPLEHRARVWMAVSGAQARMDQSPGYYHRLLEGESSSSLDEAIRTDLNRTFPDNVMFRKTADPCLQKTLYNVLLAYGLHNPDVGYCQCCAQKPGSSAGLRSSLTGMNFIAGYLILITKNEEESFWLLDALVGRILPDYYSPAMLGLKTDQEVLAELVRMKLPAVAALMDGHGVLWTLLVSRWFICLFVDILPVETVLRIWDCLFNEGSKIIFRVALTLIKQHQEFILEASSIPDICDKFKQITKGDFVTECHAFMQKIFSEPGSLSMTTITRLRKSCRAALQAQS.

Residues 74–281 enclose the Rab-GAP TBC domain; it reads GIPLEHRARV…RIWDCLFNEG (208 aa).

As to expression, highly expressed in testes, expression greatly increased at postnatal day 20 and remained high up to day 90. Moderately expressed in kidney and liver, weakly expressed in intestine, lung, ovaries and stomach. Expression of Growth hormone increased the expression in testis but decreased expression in liver and kidney.

May act as a GTPase-activating protein for Rab family protein(s). The sequence is that of Growth hormone-regulated TBC protein 1 (Grtp1) from Mus musculus (Mouse).